Here is a 387-residue protein sequence, read N- to C-terminus: Type 2 DNA topoisomerase 6 subunit A (387 aa).

A Topo IIA-type catalytic domain is found at 12-160 (EARKKAADTL…MLILSKEKGK (149 aa)). Tyrosine 106 acts as the O-(5'-phospho-DNA)-tyrosine intermediate in catalysis. The Mg(2+) site is built by glutamate 207 and aspartate 259.

It belongs to the TOP6A family. In terms of assembly, homodimer. Heterotetramer of two Top6A and two Top6B chains. Requires Mg(2+) as cofactor.

It catalyses the reaction ATP-dependent breakage, passage and rejoining of double-stranded DNA.. Relaxes both positive and negative superturns and exhibits a strong decatenase activity. The polypeptide is Type 2 DNA topoisomerase 6 subunit A (Sulfurisphaera tokodaii (strain DSM 16993 / JCM 10545 / NBRC 100140 / 7) (Sulfolobus tokodaii)).